The chain runs to 463 residues: GTPase Der (463 aa).

EngA-type G domains are found at residues 27 to 190 and 200 to 373; these read PVVA…PEVG and RRVA…ASWD. Residues 33–40, 80–84, 142–145, 206–213, 253–257, and 318–321 contribute to the GTP site; these read GRPNVGKS, DTGGW, NKVD, GKPNVGKS, DTAGL, and NKWD. The KH-like domain maps to 374 to 456; it reads TRIATGPLNT…PIRVNVRVRE (83 aa).

Belongs to the TRAFAC class TrmE-Era-EngA-EngB-Septin-like GTPase superfamily. EngA (Der) GTPase family. In terms of assembly, associates with the 50S ribosomal subunit.

Its function is as follows. GTPase that plays an essential role in the late steps of ribosome biogenesis. The sequence is that of GTPase Der from Mycobacterium bovis (strain ATCC BAA-935 / AF2122/97).